A 524-amino-acid chain; its full sequence is Leucine-rich repeat-containing protein 1 (524 aa).

17 LRR repeats span residues Asn11–Tyr34, Ala35–Leu58, Lys60–Phe81, Gln83–Lys105, Leu107–Glu126, Leu127–Asn149, Leu150–Gln172, Leu173–Leu196, His198–Asn218, Leu219–Leu242, Ser244–Lys264, Leu265–Cys288, Ser290–Lys310, Leu311–Cys334, Ser336–Gln356, Ala357–Leu380, and Leu382–Thr405. Residue Thr480 is modified to Phosphothreonine. Positions Gly484–Glu512 form a coiled coil.

As to quaternary structure, interacts with DLG1 and DLG4. May form a complex with DLG1 and ERBIN, where interaction between LRRC1 and ERBIN is indirect. As to expression, expressed strongly in testis and placenta, followed by heart, lung, kidney, thyroid, trachea, colon, prostate and pancreas.

The protein localises to the cytoplasm. It is found in the membrane. In Homo sapiens (Human), this protein is Leucine-rich repeat-containing protein 1 (LRRC1).